Reading from the N-terminus, the 374-residue chain is Pectate lyase 2 (374 aa).

The signal sequence occupies residues 1 to 22 (MKYLLPTAAAGLLLLAAQPAMA). Cys-93 and Cys-176 are joined by a disulfide. Asp-150, Asp-152, Glu-187, and Asp-191 together coordinate Ca(2+). Residue Arg-239 is part of the active site. The cysteines at positions 350 and 373 are disulfide-linked.

The protein belongs to the polysaccharide lyase 1 family. PLADES subfamily. Ca(2+) serves as cofactor.

It localises to the secreted. It catalyses the reaction Eliminative cleavage of (1-&gt;4)-alpha-D-galacturonan to give oligosaccharides with 4-deoxy-alpha-D-galact-4-enuronosyl groups at their non-reducing ends.. The protein operates within glycan metabolism; pectin degradation; 2-dehydro-3-deoxy-D-gluconate from pectin: step 2/5. In terms of biological role, involved in maceration and soft-rotting of plant tissue. This Pectobacterium carotovorum (Erwinia carotovora) protein is Pectate lyase 2 (pel2).